Consider the following 462-residue polypeptide: UDP-N-acetylmuramate--L-alanine ligase (462 aa).

ATP is bound at residue 114–120 (GSHGKTT).

It belongs to the MurCDEF family.

Its subcellular location is the cytoplasm. It catalyses the reaction UDP-N-acetyl-alpha-D-muramate + L-alanine + ATP = UDP-N-acetyl-alpha-D-muramoyl-L-alanine + ADP + phosphate + H(+). It participates in cell wall biogenesis; peptidoglycan biosynthesis. Cell wall formation. The polypeptide is UDP-N-acetylmuramate--L-alanine ligase (Brachyspira hyodysenteriae (strain ATCC 49526 / WA1)).